Consider the following 411-residue polypeptide: Serine hydroxymethyltransferase (411 aa).

(6S)-5,6,7,8-tetrahydrofolate is bound by residues L119 and 123–125 (GHL). At K228 the chain carries N6-(pyridoxal phosphate)lysine. 351–353 (SPF) lines the (6S)-5,6,7,8-tetrahydrofolate pocket.

It belongs to the SHMT family. Homodimer. Requires pyridoxal 5'-phosphate as cofactor.

The protein localises to the cytoplasm. The catalysed reaction is (6R)-5,10-methylene-5,6,7,8-tetrahydrofolate + glycine + H2O = (6S)-5,6,7,8-tetrahydrofolate + L-serine. It functions in the pathway one-carbon metabolism; tetrahydrofolate interconversion. It participates in amino-acid biosynthesis; glycine biosynthesis; glycine from L-serine: step 1/1. Functionally, catalyzes the reversible interconversion of serine and glycine with tetrahydrofolate (THF) serving as the one-carbon carrier. This reaction serves as the major source of one-carbon groups required for the biosynthesis of purines, thymidylate, methionine, and other important biomolecules. Also exhibits THF-independent aldolase activity toward beta-hydroxyamino acids, producing glycine and aldehydes, via a retro-aldol mechanism. In Clostridium botulinum (strain Eklund 17B / Type B), this protein is Serine hydroxymethyltransferase.